Consider the following 269-residue polypeptide: 3'(2'),5'-bisphosphate nucleotidase CysQ (269 aa).

Residues Glu69, Asp89, Leu91, Asp92, and Asp216 each contribute to the Mg(2+) site. Glu69 contacts substrate. Substrate contacts are provided by residues 91–94 and Asp216; that span reads LDGT.

It belongs to the inositol monophosphatase superfamily. CysQ family. Requires Mg(2+) as cofactor.

It is found in the cell inner membrane. It catalyses the reaction adenosine 3',5'-bisphosphate + H2O = AMP + phosphate. Its function is as follows. Converts adenosine-3',5'-bisphosphate (PAP) to AMP. The sequence is that of 3'(2'),5'-bisphosphate nucleotidase CysQ from Haemophilus influenzae (strain ATCC 51907 / DSM 11121 / KW20 / Rd).